The primary structure comprises 127 residues: Fumarate reductase subunit C (127 aa).

3 consecutive transmembrane segments (helical) span residues 30–50 (ATVL…GCLV), 58–78 (GWLA…ALLG), and 107–127 (IIVL…LIVV).

Belongs to the FrdC family. As to quaternary structure, part of an enzyme complex containing four subunits: a flavoprotein (FrdA), an iron-sulfur protein (FrdB), and two hydrophobic anchor proteins (FrdC and FrdD).

The protein resides in the cell inner membrane. Functionally, anchors the catalytic components of the fumarate reductase complex to the cell membrane, binds quinones. The polypeptide is Fumarate reductase subunit C (Vibrio parahaemolyticus serotype O3:K6 (strain RIMD 2210633)).